The following is a 329-amino-acid chain: Beta-1,3-galactosyltransferase 6 (329 aa).

At 1 to 11 the chain is on the cytoplasmic side; sequence MKLLRRAWRRR. The chain crosses the membrane as a helical; Signal-anchor for type II membrane protein span at residues 12–34; that stretch reads AALGLGTLALCGAALLYLARCAA. Residues 35 to 329 lie on the Lumenal side of the membrane; the sequence is EPGDPRAMSG…QCCQRREGIP (295 aa). A glycan (N-linked (GlcNAc...) asparagine) is linked at N131.

Belongs to the glycosyltransferase 31 family. It depends on Mn(2+) as a cofactor. Ubiquitous.

The protein localises to the golgi apparatus. Its subcellular location is the golgi stack membrane. It catalyses the reaction 3-O-(beta-D-galactosyl-(1-&gt;4)-beta-D-xylosyl)-L-seryl-[protein] + UDP-alpha-D-galactose = 3-O-(beta-D-galactosyl-(1-&gt;3)-beta-D-galactosyl-(1-&gt;4)-beta-D-xylosyl)-L-seryl-[protein] + UDP + H(+). Its pathway is glycan metabolism; chondroitin sulfate biosynthesis. It participates in glycan metabolism; heparan sulfate biosynthesis. Beta-1,3-galactosyltransferase that transfers galactose from UDP-galactose to substrates with a terminal beta-linked galactose residue. Has a preference for galactose-beta-1,4-xylose that is found in the linker region of glycosaminoglycans, such as heparan sulfate and chondroitin sulfate. Has no activity towards substrates with terminal glucosamine or galactosamine residues. In Homo sapiens (Human), this protein is Beta-1,3-galactosyltransferase 6 (B3GALT6).